The sequence spans 344 residues: Anthranilate phosphoribosyltransferase (344 aa).

5-phospho-alpha-D-ribose 1-diphosphate contacts are provided by residues Gly-85, 88–89 (GD), Thr-93, 95–98 (NIST), 113–121 (KHGGRSVSS), and Ser-125. Gly-85 is an anthranilate binding site. Residue Ser-97 coordinates Mg(2+). Residue Arg-171 coordinates anthranilate. Residues Asp-230 and Glu-231 each coordinate Mg(2+).

The protein belongs to the anthranilate phosphoribosyltransferase family. In terms of assembly, homodimer. Requires Mg(2+) as cofactor.

The catalysed reaction is N-(5-phospho-beta-D-ribosyl)anthranilate + diphosphate = 5-phospho-alpha-D-ribose 1-diphosphate + anthranilate. It participates in amino-acid biosynthesis; L-tryptophan biosynthesis; L-tryptophan from chorismate: step 2/5. Its function is as follows. Catalyzes the transfer of the phosphoribosyl group of 5-phosphorylribose-1-pyrophosphate (PRPP) to anthranilate to yield N-(5'-phosphoribosyl)-anthranilate (PRA). The polypeptide is Anthranilate phosphoribosyltransferase (Delftia acidovorans (strain DSM 14801 / SPH-1)).